The chain runs to 54 residues: Large ribosomal subunit protein bL33A (54 aa).

Belongs to the bacterial ribosomal protein bL33 family.

The chain is Large ribosomal subunit protein bL33A from Mycolicibacterium paratuberculosis (strain ATCC BAA-968 / K-10) (Mycobacterium paratuberculosis).